The primary structure comprises 434 residues: Serine hydroxymethyltransferase 1 (434 aa).

(6S)-5,6,7,8-tetrahydrofolate is bound by residues Leu136 and 140-142 (GHL). N6-(pyridoxal phosphate)lysine is present on Lys245.

It belongs to the SHMT family. Homodimer. It depends on pyridoxal 5'-phosphate as a cofactor.

It localises to the cytoplasm. The catalysed reaction is (6R)-5,10-methylene-5,6,7,8-tetrahydrofolate + glycine + H2O = (6S)-5,6,7,8-tetrahydrofolate + L-serine. Its pathway is one-carbon metabolism; tetrahydrofolate interconversion. The protein operates within amino-acid biosynthesis; glycine biosynthesis; glycine from L-serine: step 1/1. Functionally, catalyzes the reversible interconversion of serine and glycine with tetrahydrofolate (THF) serving as the one-carbon carrier. This reaction serves as the major source of one-carbon groups required for the biosynthesis of purines, thymidylate, methionine, and other important biomolecules. Also exhibits THF-independent aldolase activity toward beta-hydroxyamino acids, producing glycine and aldehydes, via a retro-aldol mechanism. The protein is Serine hydroxymethyltransferase 1 of Rhodospirillum rubrum (strain ATCC 11170 / ATH 1.1.1 / DSM 467 / LMG 4362 / NCIMB 8255 / S1).